The following is a 315-amino-acid chain: tRNA-specific adenosine deaminase subunit tad3 (315 aa).

A CMP/dCMP-type deaminase domain is found at 158–299 (KRIESILEDL…AELNHRYLAY (142 aa)). Residues His211, Cys253, and Cys256 each contribute to the Zn(2+) site.

Belongs to the cytidine and deoxycytidylate deaminase family. ADAT3 subfamily. Heterodimer with Tad2.

It is found in the cytoplasm. Its subcellular location is the nucleus. Its function is as follows. Structural subunit of tRNA-specific adenosine deaminase, which deaminates adenosine-34 (the first, also called wobble position of the anticodon) to inosine in many tRNAs. Inosine-34 allows the decoding of 3 different nucleotides at the third position of mRNA codons, as inosine is able to pair with U, C, and A. The wobble inosine tRNA modification is essential for cell cycle progression in the G1/S and G2/M transitions in fission yeast. This chain is tRNA-specific adenosine deaminase subunit tad3 (tad3), found in Schizosaccharomyces pombe (strain 972 / ATCC 24843) (Fission yeast).